The primary structure comprises 336 residues: uncharacterized protein (336 aa).

An N-terminal signal peptide occupies residues 1–21 (MSELVLITGITGFVASHSAEA). Lysine 38 is a binding site for NADP(+). Threonine 153 is modified (phosphothreonine). Tyrosine 167 is a binding site for NADP(+).

Belongs to the NAD(P)-dependent epimerase/dehydratase family. Dihydroflavonol-4-reductase subfamily.

This is an uncharacterized protein from Schizosaccharomyces pombe (strain 972 / ATCC 24843) (Fission yeast).